The following is a 127-amino-acid chain: UPF0102 protein Mmar10_3014 (127 aa).

It belongs to the UPF0102 family.

The polypeptide is UPF0102 protein Mmar10_3014 (Maricaulis maris (strain MCS10) (Caulobacter maris)).